The sequence spans 562 residues: Dihydroxy-acid dehydratase (562 aa).

Residue D80 coordinates Mg(2+). [2Fe-2S] cluster is bound at residue C121. The Mg(2+) site is built by D122 and K123. K123 carries the N6-carboxylysine modification. C194 provides a ligand contact to [2Fe-2S] cluster. E446 serves as a coordination point for Mg(2+). S472 (proton acceptor) is an active-site residue.

This sequence belongs to the IlvD/Edd family. As to quaternary structure, homodimer. Requires [2Fe-2S] cluster as cofactor. Mg(2+) is required as a cofactor.

The enzyme catalyses (2R)-2,3-dihydroxy-3-methylbutanoate = 3-methyl-2-oxobutanoate + H2O. It carries out the reaction (2R,3R)-2,3-dihydroxy-3-methylpentanoate = (S)-3-methyl-2-oxopentanoate + H2O. It functions in the pathway amino-acid biosynthesis; L-isoleucine biosynthesis; L-isoleucine from 2-oxobutanoate: step 3/4. Its pathway is amino-acid biosynthesis; L-valine biosynthesis; L-valine from pyruvate: step 3/4. In terms of biological role, functions in the biosynthesis of branched-chain amino acids. Catalyzes the dehydration of (2R,3R)-2,3-dihydroxy-3-methylpentanoate (2,3-dihydroxy-3-methylvalerate) into 2-oxo-3-methylpentanoate (2-oxo-3-methylvalerate) and of (2R)-2,3-dihydroxy-3-methylbutanoate (2,3-dihydroxyisovalerate) into 2-oxo-3-methylbutanoate (2-oxoisovalerate), the penultimate precursor to L-isoleucine and L-valine, respectively. The polypeptide is Dihydroxy-acid dehydratase (Staphylococcus aureus (strain Mu50 / ATCC 700699)).